The sequence spans 185 residues: DAN domain family member 5 (185 aa).

A signal peptide spans 1–23 (MFRSQFTTLLGLFSGAWLPTGSG). N-linked (GlcNAc...) asparagine glycosylation occurs at Asn39. Intrachain disulfides connect Cys97–Cys144, Cys111–Cys158, Cys121–Cys179, and Cys125–Cys181. In terms of domain architecture, CTCK spans 97-182 (CKALSFVQVI…TVLVQKCQCR (86 aa)).

It belongs to the DAN family. Expressed throughout the neural retina and in the photoreceptor nuclear layer. In the retina, widely expressed in inner nuclear layer, as well as in the ganglion cell layer.

It is found in the secreted. In terms of biological role, antagonist of the extracellular signaling protein NODAL, which is required for correct left-right patterning during embryonic development. Antagonist of BMP4 signaling. Antagonist of TGF-beta signaling. Independently of its role in left-right axis establishment, plays a role during heart development, possibly through the regulation of TGF-beta/Nodal signaling pathway. Displays anti-angiogenic activity by inhibiting endothelial sprouting, migration, and proliferation. Once internalized by endothelial cells, may alter their redox and glycolytic balance. The protein is DAN domain family member 5 (Dand5) of Mus musculus (Mouse).